We begin with the raw amino-acid sequence, 739 residues long: Poly(A) polymerase alpha (739 aa).

Positions 1–17 (MPFPVTTQGSQQTQPPQ) are enriched in low complexity. Positions 1–23 (MPFPVTTQGSQQTQPPQKHYGIT) are disordered. Residues Ser10 and Ser24 each carry the phosphoserine modification. ATP contacts are provided by residues 100-102 (FGS), Thr109, 113-115 (DID), Asp167, Lys228, Tyr237, and 246-247 (GV). Residues Asp113, Asp115, and Asp167 each contribute to the Mg(2+) site. Residues Lys444, Lys445, Lys506, and Lys507 each participate in a glycyl lysine isopeptide (Lys-Gly) (interchain with G-Cter in SUMO) cross-link. The Nuclear localization signal 1 signature appears at 490-507 (RKQLHQLLPSHVLQKKKK). 2 disordered regions span residues 501-565 (VLQK…AVTA) and 580-700 (QINS…TIQT). Positions 508 to 643 (HSTEGVKLTP…AKIPNPIVGV (136 aa)) are ser/Thr-rich. Residues 518–534 (LNDSSLDLSMDSDNSMS) are compositionally biased toward low complexity. The segment covering 535-557 (VPSPTSAMKTSPLNSSGSSQGRN) has biased composition (polar residues). Ser537 bears the Phosphoserine; by MAPK mark. The residue at position 558 (Ser558) is a Phosphoserine. Positions 583–594 (SSESSGGTSSES) are enriched in low complexity. Positions 595–604 (IPQTATQPAI) are enriched in polar residues. Residues 611–620 (TVSRVVSSTR) show a composition bias toward low complexity. An N6-acetyllysine mark is found at Lys635 and Lys644. The Nuclear localization signal 2 motif lies at 644 to 659 (KRTSSPHKEESPKKTK). Basic and acidic residues-rich tracts occupy residues 649-660 (PHKEESPKKTKT) and 676-686 (GHDKTETKEQL). The required for interaction with NUDT21 stretch occupies residues 671–739 (CLALSGHDKT…KNSIKLRLNR (69 aa)). The segment covering 688 to 700 (TETSTTQSETIQT) has biased composition (low complexity). Lys730 is modified (N6-acetyllysine; alternate). Lys730 is covalently cross-linked (Glycyl lysine isopeptide (Lys-Gly) (interchain with G-Cter in SUMO); alternate). Position 732 is a phosphoserine (Ser732). Lys734 bears the N6-acetyllysine; alternate mark. Lys734 participates in a covalent cross-link: Glycyl lysine isopeptide (Lys-Gly) (interchain with G-Cter in SUMO); alternate.

This sequence belongs to the poly(A) polymerase family. Monomer. Found in a complex with CPSF1, FIP1L1 and PAPOLA. Interacts with AHCYL1 and FIP1L1; the interaction with AHCYL1 seems to increase interaction with FIP1L1. Interacts with NUDT21; the interaction is diminished by acetylation. Interacts with KPNB1; the interaction promotes PAP nuclear import and is inhibited by acetylation of PAP. Mg(2+) serves as cofactor. The cofactor is Mn(2+). Post-translationally, polysumoylated. Varying sumoylation depending on tissue- and cell-type. Highly sumoylated in bladder and NIH 3T3 cells. Sumoylation is required for nuclear localization and enhances PAP stability. Desumoylated by SENP1. Inhibits polymerase activity. Hyperphosphorylation on multiple CDK2 consensus and non-consensus sites in the C-terminal Ser/Thr-rich region represses PAP activity in late M-phase. Phosphorylation/dephosphorylation may regulate the interaction between PAP and CPSF. In terms of processing, acetylated in the C-terminus. Acetylation decreases interaction with NUDT21 and KPNB1, and inhibits nuclear localization through inhibiting binding to the importin alpha/beta complex.

It localises to the nucleus. The enzyme catalyses RNA(n) + ATP = RNA(n)-3'-adenine ribonucleotide + diphosphate. Functionally, polymerase that creates the 3'-poly(A) tail of mRNA's. Also required for the endoribonucleolytic cleavage reaction at some polyadenylation sites. May acquire specificity through interaction with a cleavage and polyadenylation specificity factor (CPSF) at its C-terminus. The chain is Poly(A) polymerase alpha (PAPOLA) from Bos taurus (Bovine).